Reading from the N-terminus, the 585-residue chain is uncharacterized protein (585 aa).

The span at 1–18 shows a compositional bias: polar residues; it reads MSALSTKLEPTNSYSESL. Positions 1 to 23 are disordered; it reads MSALSTKLEPTNSYSESLPPQRR.

The protein belongs to the protein kinase superfamily. ADCK protein kinase family.

This is an uncharacterized protein from Synechocystis sp. (strain ATCC 27184 / PCC 6803 / Kazusa).